A 465-amino-acid chain; its full sequence is Lysosomal dipeptide transporter MFSD1 (465 aa).

Positions M1–A23 are disordered. The short motif at L11–L12 is the Dileucine internalization motif element. A run of 12 helical transmembrane segments spans residues L39–C59, L83–I103, T113–F133, A135–V155, L170–L191, I213–A233, L266–L286, A304–V324, I331–T351, L361–V381, F392–L412, and L418–L438.

It belongs to the major facilitator superfamily. Homodimer. Interacts with lysosomal protein GLMP (via lumenal domain); the interaction starts while both proteins are still in the endoplasmic reticulum and is required for stabilization of MFSD1 in lysosomes but has no direct effect on its targeting to lysosomes or transporter activity.

It localises to the lysosome membrane. The enzyme catalyses L-alpha-aminoacyl-L-arginine(out) = L-alpha-aminoacyl-L-arginine(in). It catalyses the reaction L-arginyl-L-alpha-amino acid(out) = L-arginyl-L-alpha-amino acid(in). It carries out the reaction L-arginyl-glycine(out) = L-arginyl-glycine(in). The catalysed reaction is L-alpha-aminoacyl-L-lysine(out) = L-alpha-aminoacyl-L-lysine(in). The enzyme catalyses L-aspartyl-L-lysine(out) = L-aspartyl-L-lysine(in). It catalyses the reaction L-alanyl-L-lysine(out) = L-alanyl-L-lysine(in). It carries out the reaction L-lysyl-L-alpha-amino acid(out) = L-lysyl-L-alpha-amino acid(in). The catalysed reaction is L-lysyl-L-alanine(out) = L-lysyl-L-alanine(in). The enzyme catalyses L-lysyl-L-lysine(out) = L-lysyl-L-lysine(in). It catalyses the reaction L-lysyl-glycine(out) = L-lysyl-glycine(in). It carries out the reaction L-alpha-aminoacyl-L-histidine(out) = L-alpha-aminoacyl-L-histidine(in). The catalysed reaction is L-histidyl-L-alpha-amino acid(out) = L-histidyl-L-alpha-amino acid(in). The enzyme catalyses L-histidyl-glycine(out) = L-histidyl-glycine(in). Lysosomal dipeptide uniporter that selectively exports lysine, arginine or histidine-containing dipeptides with a net positive charge from the lysosome lumen into the cytosol. Could play a role in a specific type of protein O-glycosylation indirectly regulating macrophages migration and tissue invasion. Also essential for liver homeostasis. The polypeptide is Lysosomal dipeptide transporter MFSD1 (Pongo abelii (Sumatran orangutan)).